Reading from the N-terminus, the 146-residue chain is Hemoglobin subunit beta (146 aa).

Valine 1 carries the post-translational modification N-acetylvaline. Residues 2-146 (HLSGEEKTAL…VANALAHKYH (145 aa)) form the Globin domain. Serine 44 bears the Phosphoserine mark. Position 59 is an N6-acetyllysine (lysine 59). Histidine 63 serves as a coordination point for heme b. Residue lysine 82 is modified to N6-acetyllysine. Histidine 92 contacts heme b. Position 93 is an S-nitrosocysteine (cysteine 93). Lysine 144 carries the N6-acetyllysine modification.

It belongs to the globin family. Heterotetramer of two alpha chains and two beta chains. As to expression, red blood cells.

Involved in oxygen transport from the lung to the various peripheral tissues. This is Hemoglobin subunit beta from Tamiasciurus hudsonicus (American red squirrel).